Here is a 333-residue protein sequence, read N- to C-terminus: Lipoyl synthase (333 aa).

Positions 56, 61, 67, 82, 86, 89, and 293 each coordinate [4Fe-4S] cluster. The 215-residue stretch at 68-282 (WEDREATFLI…GRVGAELGFS (215 aa)) folds into the Radical SAM core domain. The tract at residues 301–333 (QQAMTARDQDRSEMSVPPESVSENSHGQRPSPW) is disordered. Over residues 314–325 (MSVPPESVSENS) the composition is skewed to low complexity.

This sequence belongs to the radical SAM superfamily. Lipoyl synthase family. [4Fe-4S] cluster serves as cofactor.

The protein resides in the cytoplasm. The catalysed reaction is [[Fe-S] cluster scaffold protein carrying a second [4Fe-4S](2+) cluster] + N(6)-octanoyl-L-lysyl-[protein] + 2 oxidized [2Fe-2S]-[ferredoxin] + 2 S-adenosyl-L-methionine + 4 H(+) = [[Fe-S] cluster scaffold protein] + N(6)-[(R)-dihydrolipoyl]-L-lysyl-[protein] + 4 Fe(3+) + 2 hydrogen sulfide + 2 5'-deoxyadenosine + 2 L-methionine + 2 reduced [2Fe-2S]-[ferredoxin]. Its pathway is protein modification; protein lipoylation via endogenous pathway; protein N(6)-(lipoyl)lysine from octanoyl-[acyl-carrier-protein]: step 2/2. Catalyzes the radical-mediated insertion of two sulfur atoms into the C-6 and C-8 positions of the octanoyl moiety bound to the lipoyl domains of lipoate-dependent enzymes, thereby converting the octanoylated domains into lipoylated derivatives. This is Lipoyl synthase from Frankia casuarinae (strain DSM 45818 / CECT 9043 / HFP020203 / CcI3).